The sequence spans 178 residues: MTKKEQALIEQYAKSLVEVASEHHSLDALQADVLAILETFVTTNLDQSLSSLAVPHAEKIKLLTLLKGSNSVYMNNFLNLILQNEREAYLYQMLQTVLNEIAIVSNQYDVTVTSSLPLTEEQKSRVRAVVAKKFAVTAGRLIEKVDPSLIGGFIISVNNKVIDTSIRRQLQAFKMNLK.

The protein belongs to the ATPase delta chain family. As to quaternary structure, F-type ATPases have 2 components, F(1) - the catalytic core - and F(0) - the membrane proton channel. F(1) has five subunits: alpha(3), beta(3), gamma(1), delta(1), epsilon(1). F(0) has three main subunits: a(1), b(2) and c(10-14). The alpha and beta chains form an alternating ring which encloses part of the gamma chain. F(1) is attached to F(0) by a central stalk formed by the gamma and epsilon chains, while a peripheral stalk is formed by the delta and b chains.

Its subcellular location is the cell membrane. Functionally, f(1)F(0) ATP synthase produces ATP from ADP in the presence of a proton or sodium gradient. F-type ATPases consist of two structural domains, F(1) containing the extramembraneous catalytic core and F(0) containing the membrane proton channel, linked together by a central stalk and a peripheral stalk. During catalysis, ATP synthesis in the catalytic domain of F(1) is coupled via a rotary mechanism of the central stalk subunits to proton translocation. In terms of biological role, this protein is part of the stalk that links CF(0) to CF(1). It either transmits conformational changes from CF(0) to CF(1) or is implicated in proton conduction. In Streptococcus pyogenes serotype M2 (strain MGAS10270), this protein is ATP synthase subunit delta.